A 238-amino-acid polypeptide reads, in one-letter code: Dolichyldiphosphatase 1 (238 aa).

4 helical membrane-spanning segments follow: residues 33 to 53, 100 to 120, 130 to 150, and 162 to 182; these read LAYLSLGPVFVIVGFVTLIIF, PSSHSQFMWFFSVYSFLFLYL, FLDLLWRHVLSLGLLAAAFLV, and WSQVLYGGIAGGLMAVAWFIF.

It belongs to the dolichyldiphosphatase family.

It localises to the endoplasmic reticulum membrane. It carries out the reaction a di-trans,poly-cis-dolichyl diphosphate + H2O = a di-trans,poly-cis-dolichyl phosphate + phosphate + H(+). Its pathway is protein modification; protein glycosylation. In terms of biological role, required for efficient N-glycosylation. Necessary for maintaining optimal levels of dolichol-linked oligosaccharides. Hydrolyzes dolichyl pyrophosphate at a very high rate and dolichyl monophosphate at a much lower rate. Does not act on phosphatidate. This chain is Dolichyldiphosphatase 1 (DOLPP1), found in Plecturocebus moloch (Dusky titi monkey).